Reading from the N-terminus, the 239-residue chain is MNVSLFVTCLADIFYPGVGKDTVEVLERHGCNVKFPENQICCGQPAFNSGYHEDTKKAAKHTIETFADADYVVLPSGSCAAMLLEYKELFADDPEWEKRAEELASKTYELTQFLVRVLKVEDIGAVCHKKATYHTSCHMSRLLRETEAPFSLLEQVKGLELAPLANKESCCGFGGTFSVKMPAISEQMVEEKVGHIEATGADLLIGADCGCLMNIGGRIERNGKTIEVKHIAQVLNSKE.

It belongs to the LutA/YkgE family.

Is involved in L-lactate degradation and allows cells to grow with lactate as the sole carbon source. This Shouchella clausii (strain KSM-K16) (Alkalihalobacillus clausii) protein is Lactate utilization protein A.